A 292-amino-acid polypeptide reads, in one-letter code: GTP cyclohydrolase FolE2 (292 aa).

This sequence belongs to the GTP cyclohydrolase IV family.

The catalysed reaction is GTP + H2O = 7,8-dihydroneopterin 3'-triphosphate + formate + H(+). It participates in cofactor biosynthesis; 7,8-dihydroneopterin triphosphate biosynthesis; 7,8-dihydroneopterin triphosphate from GTP: step 1/1. Functionally, converts GTP to 7,8-dihydroneopterin triphosphate. The sequence is that of GTP cyclohydrolase FolE2 from Staphylococcus saprophyticus subsp. saprophyticus (strain ATCC 15305 / DSM 20229 / NCIMB 8711 / NCTC 7292 / S-41).